A 645-amino-acid chain; its full sequence is UvrABC system protein B (645 aa).

In terms of domain architecture, Helicase ATP-binding spans Ala24–Thr414. Gly37 to Thr44 is a binding site for ATP. Positions Tyr90–Ile113 match the Beta-hairpin motif. In terms of domain architecture, Helicase C-terminal spans Ala426 to Ile591. A UVR domain is found at Lys610–Leu645.

The protein belongs to the UvrB family. Forms a heterotetramer with UvrA during the search for lesions. Interacts with UvrC in an incision complex.

The protein resides in the cytoplasm. The UvrABC repair system catalyzes the recognition and processing of DNA lesions. A damage recognition complex composed of 2 UvrA and 2 UvrB subunits scans DNA for abnormalities. Upon binding of the UvrA(2)B(2) complex to a putative damaged site, the DNA wraps around one UvrB monomer. DNA wrap is dependent on ATP binding by UvrB and probably causes local melting of the DNA helix, facilitating insertion of UvrB beta-hairpin between the DNA strands. Then UvrB probes one DNA strand for the presence of a lesion. If a lesion is found the UvrA subunits dissociate and the UvrB-DNA preincision complex is formed. This complex is subsequently bound by UvrC and the second UvrB is released. If no lesion is found, the DNA wraps around the other UvrB subunit that will check the other stand for damage. The protein is UvrABC system protein B of Wolbachia sp. subsp. Brugia malayi (strain TRS).